Here is a 102-residue protein sequence, read N- to C-terminus: NADH-quinone oxidoreductase subunit K 1 (102 aa).

A run of 3 helical transmembrane segments spans residues isoleucine 5–leucine 25, isoleucine 31–phenylalanine 51, and leucine 65–phenylalanine 85.

Belongs to the complex I subunit 4L family. In terms of assembly, NDH-1 is composed of 14 different subunits. Subunits NuoA, H, J, K, L, M, N constitute the membrane sector of the complex.

The protein localises to the cell inner membrane. The catalysed reaction is a quinone + NADH + 5 H(+)(in) = a quinol + NAD(+) + 4 H(+)(out). In terms of biological role, NDH-1 shuttles electrons from NADH, via FMN and iron-sulfur (Fe-S) centers, to quinones in the respiratory chain. The immediate electron acceptor for the enzyme in this species is believed to be ubiquinone. Couples the redox reaction to proton translocation (for every two electrons transferred, four hydrogen ions are translocated across the cytoplasmic membrane), and thus conserves the redox energy in a proton gradient. This chain is NADH-quinone oxidoreductase subunit K 1, found in Rhizobium meliloti (strain 1021) (Ensifer meliloti).